The following is a 497-amino-acid chain: Cobyric acid synthase (497 aa).

A GATase cobBQ-type domain is found at 257-431 (WLRVAAVRLP…WHGLLDNDDF (175 aa)). Cysteine 338 serves as the catalytic Nucleophile. Histidine 423 is an active-site residue.

The protein belongs to the CobB/CobQ family. CobQ subfamily.

It participates in cofactor biosynthesis; adenosylcobalamin biosynthesis. Functionally, catalyzes amidations at positions B, D, E, and G on adenosylcobyrinic A,C-diamide. NH(2) groups are provided by glutamine, and one molecule of ATP is hydrogenolyzed for each amidation. This chain is Cobyric acid synthase, found in Mycolicibacterium paratuberculosis (strain ATCC BAA-968 / K-10) (Mycobacterium paratuberculosis).